The following is a 356-amino-acid chain: Histidinol-phosphate aminotransferase (356 aa).

Lys214 bears the N6-(pyridoxal phosphate)lysine mark.

It belongs to the class-II pyridoxal-phosphate-dependent aminotransferase family. Histidinol-phosphate aminotransferase subfamily. In terms of assembly, homodimer. Pyridoxal 5'-phosphate serves as cofactor.

The enzyme catalyses L-histidinol phosphate + 2-oxoglutarate = 3-(imidazol-4-yl)-2-oxopropyl phosphate + L-glutamate. It functions in the pathway amino-acid biosynthesis; L-histidine biosynthesis; L-histidine from 5-phospho-alpha-D-ribose 1-diphosphate: step 7/9. The polypeptide is Histidinol-phosphate aminotransferase (Shigella boydii serotype 4 (strain Sb227)).